The chain runs to 558 residues: Polysialic acid transport protein KpsD (558 aa).

Residues 1 to 20 form the signal peptide; it reads MKLFKSILLIAACHAAQASA.

To E.coli K1 KpsD.

It localises to the periplasm. Involved in the translocation of the polysialic acid capsule across the outer membrane to the cell surface. May function as the periplasmic binding element of the PSA transport system, in which it transiently interacts with the membrane component of the transporter, binds polysaccharide and transports the polymer to a component in the outer membrane. The protein is Polysialic acid transport protein KpsD (kpsD) of Escherichia coli.